A 471-amino-acid chain; its full sequence is Putative multidrug resistance protein MdtD (471 aa).

The next 13 helical transmembrane spans lie at 12–32 (LWIV…VNTA), 49–69 (MVIV…GWLA), 77–97 (IFFT…QSST), 106–126 (VLQG…VMKI), 138–158 (FVTL…GLLV), 165–185 (WIFL…LWLM), 197–217 (FSGF…LDGY), 225–245 (AGLG…LWHA), 263–285 (FSLG…FMTP), 290–312 (IGLG…GSMG), 342–362 (LLFM…VMLF), 396–416 (MVMQ…LGAF), and 431–451 (IFFW…LVFA).

The protein belongs to the major facilitator superfamily. TCR/Tet family.

Its subcellular location is the cell inner membrane. The protein is Putative multidrug resistance protein MdtD of Cronobacter sakazakii (strain ATCC BAA-894) (Enterobacter sakazakii).